The chain runs to 219 residues: Ribonuclease HII (219 aa).

Residues 30 to 219 (RVIAGIDEAG…VREHVTCPSS (190 aa)) enclose the RNase H type-2 domain. Residues aspartate 36, glutamate 37, and aspartate 128 each contribute to the a divalent metal cation site.

It belongs to the RNase HII family. Mn(2+) is required as a cofactor. The cofactor is Mg(2+).

It localises to the cytoplasm. It catalyses the reaction Endonucleolytic cleavage to 5'-phosphomonoester.. Functionally, endonuclease that specifically degrades the RNA of RNA-DNA hybrids. The sequence is that of Ribonuclease HII from Pelobacter propionicus (strain DSM 2379 / NBRC 103807 / OttBd1).